Consider the following 396-residue polypeptide: Elongation factor Tu (396 aa).

Positions 10 to 205 constitute a tr-type G domain; sequence KPHVNIGTIG…ACDDSIPDPE (196 aa). Residues 19–26 are G1; it reads GHVDHGKT. 19–26 is a binding site for GTP; it reads GHVDHGKT. Residue Thr-26 coordinates Mg(2+). The G2 stretch occupies residues 62 to 66; sequence GITIN. A G3 region spans residues 83–86; it reads DAPG. Residues 83–87 and 138–141 contribute to the GTP site; these read DAPGH and NKCD. Residues 138-141 form a G4 region; it reads NKCD. A G5 region spans residues 175-177; sequence SAL.

This sequence belongs to the TRAFAC class translation factor GTPase superfamily. Classic translation factor GTPase family. EF-Tu/EF-1A subfamily. Monomer.

It localises to the cytoplasm. The enzyme catalyses GTP + H2O = GDP + phosphate + H(+). GTP hydrolase that promotes the GTP-dependent binding of aminoacyl-tRNA to the A-site of ribosomes during protein biosynthesis. This Corynebacterium aurimucosum (strain ATCC 700975 / DSM 44827 / CIP 107346 / CN-1) (Corynebacterium nigricans) protein is Elongation factor Tu.